We begin with the raw amino-acid sequence, 197 residues long: Nucleoside triphosphate pyrophosphatase (197 aa).

Asp-71 (proton acceptor) is an active-site residue.

Belongs to the Maf family. A divalent metal cation serves as cofactor.

It is found in the cytoplasm. The catalysed reaction is a ribonucleoside 5'-triphosphate + H2O = a ribonucleoside 5'-phosphate + diphosphate + H(+). It carries out the reaction a 2'-deoxyribonucleoside 5'-triphosphate + H2O = a 2'-deoxyribonucleoside 5'-phosphate + diphosphate + H(+). Nucleoside triphosphate pyrophosphatase. May have a dual role in cell division arrest and in preventing the incorporation of modified nucleotides into cellular nucleic acids. In Nostoc punctiforme (strain ATCC 29133 / PCC 73102), this protein is Nucleoside triphosphate pyrophosphatase.